Reading from the N-terminus, the 335-residue chain is UPF0353 protein NFA_34780 (335 aa).

The next 2 membrane-spanning stretches (helical) occupy residues 8–28 (ALIW…YVLV) and 61–81 (IALM…PTSV). The VWFA domain occupies 90–295 (TVVLVMDVSL…EELTAVYDTL (206 aa)). A helical membrane pass occupies residues 310 to 330 (RPWLLLGMLVVAAGIVTGLLY).

The protein belongs to the UPF0353 family.

The protein localises to the cell membrane. In Nocardia farcinica (strain IFM 10152), this protein is UPF0353 protein NFA_34780.